The chain runs to 262 residues: Acyl-[acyl-carrier-protein]--UDP-N-acetylglucosamine O-acyltransferase (262 aa).

It belongs to the transferase hexapeptide repeat family. LpxA subfamily. Homotrimer.

It is found in the cytoplasm. The enzyme catalyses a (3R)-hydroxyacyl-[ACP] + UDP-N-acetyl-alpha-D-glucosamine = a UDP-3-O-[(3R)-3-hydroxyacyl]-N-acetyl-alpha-D-glucosamine + holo-[ACP]. The protein operates within glycolipid biosynthesis; lipid IV(A) biosynthesis; lipid IV(A) from (3R)-3-hydroxytetradecanoyl-[acyl-carrier-protein] and UDP-N-acetyl-alpha-D-glucosamine: step 1/6. Its function is as follows. Involved in the biosynthesis of lipid A, a phosphorylated glycolipid that anchors the lipopolysaccharide to the outer membrane of the cell. This chain is Acyl-[acyl-carrier-protein]--UDP-N-acetylglucosamine O-acyltransferase, found in Wigglesworthia glossinidia brevipalpis.